A 189-amino-acid chain; its full sequence is Elongation factor P 2 (189 aa).

It belongs to the elongation factor P family.

It localises to the cytoplasm. The protein operates within protein biosynthesis; polypeptide chain elongation. Functionally, involved in peptide bond synthesis. Stimulates efficient translation and peptide-bond synthesis on native or reconstituted 70S ribosomes in vitro. Probably functions indirectly by altering the affinity of the ribosome for aminoacyl-tRNA, thus increasing their reactivity as acceptors for peptidyl transferase. This Lactobacillus johnsonii (strain CNCM I-12250 / La1 / NCC 533) protein is Elongation factor P 2 (efp2).